The following is an 84-amino-acid chain: U4-theraphotoxin-Hhn1aa (84 aa).

A signal peptide spans 1–22 (MKVTLIAILTCAAVLVLHTTAA). Residues 23–47 (EELEESQLMEVGMPDTELAAVDEER) constitute a propeptide that is removed on maturation. 2 disulfides stabilise this stretch: Cys51–Cys65 and Cys55–Cys76.

The protein belongs to the neurotoxin 12 (Hwtx-2) family. 02 (Hwtx-2) subfamily. As to expression, expressed by the venom gland.

The protein resides in the secreted. Its function is as follows. Postsynaptic neurotoxin. The protein is U4-theraphotoxin-Hhn1aa of Cyriopagopus hainanus (Chinese bird spider).